The chain runs to 466 residues: Soluble pyridine nucleotide transhydrogenase (466 aa).

Residue 36-45 (ERYHNIGGGC) coordinates FAD.

The protein belongs to the class-I pyridine nucleotide-disulfide oxidoreductase family. FAD is required as a cofactor.

The protein localises to the cytoplasm. It carries out the reaction NAD(+) + NADPH = NADH + NADP(+). Its function is as follows. Conversion of NADPH, generated by peripheral catabolic pathways, to NADH, which can enter the respiratory chain for energy generation. The chain is Soluble pyridine nucleotide transhydrogenase from Erwinia tasmaniensis (strain DSM 17950 / CFBP 7177 / CIP 109463 / NCPPB 4357 / Et1/99).